A 487-amino-acid chain; its full sequence is Cobyric acid synthase (487 aa).

Residues 251–439 enclose the GATase cobBQ-type domain; the sequence is KLKVVAPAYP…CHGVLDHPEA (189 aa). Residue cysteine 332 is the Nucleophile of the active site. The active site involves histidine 431.

It belongs to the CobB/CobQ family. CobQ subfamily.

It participates in cofactor biosynthesis; adenosylcobalamin biosynthesis. Functionally, catalyzes amidations at positions B, D, E, and G on adenosylcobyrinic A,C-diamide. NH(2) groups are provided by glutamine, and one molecule of ATP is hydrogenolyzed for each amidation. This is Cobyric acid synthase from Dechloromonas aromatica (strain RCB).